Consider the following 929-residue polypeptide: Band 4.1-like protein 3 (929 aa).

Met1 bears the N-acetylmethionine mark. The disordered stretch occupies residues 1-72 (MTTESGSDSE…STPVKREIGD (72 aa)). The residue at position 2 (Thr2) is an N-acetylthreonine; in Band 4.1-like protein 3, N-terminally processed. The span at 20–33 (QEAAGPQGQAGAQP) shows a compositional bias: low complexity. Residue Ser96 is modified to Phosphoserine. Positions 118–399 (MQCKVTLLDG…EHHTFFRLLL (282 aa)) constitute an FERM domain. Residues 402 to 528 (APPKKFLTLG…PVTALRHEGK (127 aa)) are hydrophilic. Phosphoserine is present on residues Ser428, Ser451, and Ser486. The interval 490–554 (LITTVTPEKK…TESDQEEDAE (65 aa)) is disordered. Position 495 is a phosphothreonine (Thr495). Basic and acidic residues predominate over residues 496–516 (PEKKAEEERVEEEDRRKKAEE). At Thr518 the chain carries Phosphothreonine. Over residues 523–536 (LRHEGKTDSERTDT) the composition is skewed to basic and acidic residues. Residues His525 and Ser543 each carry the phosphoserine modification. Position 545 is a phosphothreonine (Thr545). The residue at position 547 (Ser547) is a Phosphoserine. The segment at 559-602 (DLDKTQDELMKHQTNISELKRTFLETSTETALTNEWEKRLSTSP) is spectrin--actin-binding. 3 disordered regions span residues 608-630 (RQEDAPMIEPLVPEETKQSSGEK), 665-689 (LETKTEPVEAEVESTPHPQPLSTEK), and 705-807 (VHAS…SPGG). A Phosphothreonine modification is found at Thr725. The segment covering 726 to 737 (PTDRRHTGKGKE) has biased composition (basic and acidic residues). The interval 777–929 (RTSEGLEQKS…TEITPEDGED (153 aa)) is C-terminal (CTD). A compositionally biased stretch (low complexity) spans 789-802 (ESSTVRVESTSVGS). Phosphoserine is present on residues Ser802 and Ser804. Residue Thr923 is modified to Phosphothreonine.

Interacts (via FERM domain) with CADM1. Interacts (via FERM domain) with PRMT3; the interaction is direct and inhibits the protein-arginine N-methyltransferase activity of PRMT3. Interacts with PRMT5. Interacts with PRMT6. As to quaternary structure, has the complete spectrin--actin-binding (SAB) domain and fully interacts with spectrin and actin. As to expression, detected in brain (at protein level). Highest expression in brain, lower in testis, adrenal gland, heart and kidney. Also present in muscle and epithelial cells. Isoform 1 is expressed in brain, isoform 2 is expressed in heart and isoform 3 is mostly expressed in kidney but also in heart and brain. Isoform 6 seems to be most abundant in kidney while isoform 4 and isoform 5 are predominantly expressed in heart and brain.

It is found in the cytoplasm. The protein localises to the cytoskeleton. The protein resides in the cell membrane. It localises to the cell junction. Its function is as follows. Tumor suppressor that inhibits cell proliferation and promotes apoptosis. Modulates the activity of protein arginine N-methyltransferases, including PRMT3 and PRMT5. The sequence is that of Band 4.1-like protein 3 from Mus musculus (Mouse).